A 151-amino-acid polypeptide reads, in one-letter code: MFRGANAVSLDAKGRLAMPSRYRDELDSRCNGQLIVTIDAVDPCLCVYPLDEWEQIEAKLRALPSLREENRRLQRLLIGNAVDLELDGSGRFLVPPRLREYAKLDKKAMLVGQLNKFQLWDEDAWNAVSAADLAAIQQPGAMPDELRDLIL.

SpoVT-AbrB domains follow at residues 5-52 (ANAV…PLDE) and 81-124 (AVDL…DEDA).

The protein belongs to the MraZ family. As to quaternary structure, forms oligomers.

Its subcellular location is the cytoplasm. It localises to the nucleoid. The sequence is that of Transcriptional regulator MraZ from Pseudomonas putida (strain ATCC 700007 / DSM 6899 / JCM 31910 / BCRC 17059 / LMG 24140 / F1).